Here is a 933-residue protein sequence, read N- to C-terminus: Envelope glycoprotein B (933 aa).

Residues 1–36 (MPRPRPRALRGSSPGWALVAAVAVGAALLMATLAVA) form the signal peptide. Positions 36–49 (AAPPGPRGPAARSP) are enriched in low complexity. The tract at residues 36-115 (AAPPGPRGPA…GNGTRSAARR (80 aa)) is disordered. Residues 37–797 (APPGPRGPAA…SGVSSFLSNP (761 aa)) are Virion surface-facing. Residues 54 to 69 (ASVEPVEDGDYDEYDD) are compositionally biased toward acidic residues. 2 N-linked (GlcNAc...) asparagine; by host glycosylation sites follow: Asn107 and Asn161. Disulfide bonds link Cys136–Cys596, Cys153–Cys552, Cys227–Cys291, Cys384–Cys432, and Cys619–Cys656. Involved in fusion and/or binding to host membrane stretches follow at residues 193-199 (TWQGSRY) and 278-285 (AHAGFYKT). N-linked (GlcNAc...) asparagine; by host glycosylation is found at Asn418 and Asn450. Residues Asn697 and Asn747 are each glycosylated (N-linked (GlcNAc...) asparagine; by host). Hydrophobic membrane proximal region stretches follow at residues 742-795 (IDRI…SFLS) and 754-795 (LMAG…SFLS). Residues 798–818 (FGALAVGLLVLAGLVAAFFAM) traverse the membrane as a helical segment. Residues 819 to 933 (RYIMRLRANP…SKDDEDGADP (115 aa)) are Intravirion-facing. The Golgi targeting signature appears at 881 to 884 (YMTL). The short motif at 920–923 (YQPL) is the Internalization motif element.

The protein belongs to the herpesviridae glycoprotein B family. As to quaternary structure, homotrimer; disulfide-linked. Binds to heparan sulfate proteoglycans. Interacts with gH/gL heterodimer.

It localises to the virion membrane. Its subcellular location is the host cell membrane. The protein resides in the host endosome membrane. It is found in the host Golgi apparatus membrane. Functionally, envelope glycoprotein that forms spikes at the surface of virion envelope. Essential for the initial attachment to heparan sulfate moieties of the host cell surface proteoglycans. Involved in fusion of viral and cellular membranes leading to virus entry into the host cell. Following initial binding to its host receptors, membrane fusion is mediated by the fusion machinery composed at least of gB and the heterodimer gH/gL. May be involved in the fusion between the virion envelope and the outer nuclear membrane during virion egress. The chain is Envelope glycoprotein B from Herpesvirus ateles type 1 (strain Lennette).